Consider the following 65-residue polypeptide: Large ribosomal subunit protein bL28 (65 aa).

Belongs to the bacterial ribosomal protein bL28 family.

The chain is Large ribosomal subunit protein bL28 from Lachnoclostridium phytofermentans (strain ATCC 700394 / DSM 18823 / ISDg) (Clostridium phytofermentans).